A 289-amino-acid polypeptide reads, in one-letter code: Spore coat polysaccharide biosynthesis protein SpsD (289 aa).

The N-acetyltransferase domain occupies 137–289; the sequence is FELGPPEPGD…YHIWPGKEAK (153 aa).

It functions in the pathway spore coat biogenesis; spore coat polysaccharide biosynthesis. The protein is Spore coat polysaccharide biosynthesis protein SpsD (spsD) of Bacillus subtilis (strain 168).